A 567-amino-acid chain; its full sequence is Oxygen-dependent choline dehydrogenase (567 aa).

FAD is bound at residue 4-33 (DYIIIGAGSAGNVLAARLTEDADVTVLLLE). The active-site Proton acceptor is H473.

This sequence belongs to the GMC oxidoreductase family. FAD serves as cofactor.

It carries out the reaction choline + A = betaine aldehyde + AH2. The enzyme catalyses betaine aldehyde + NAD(+) + H2O = glycine betaine + NADH + 2 H(+). The protein operates within amine and polyamine biosynthesis; betaine biosynthesis via choline pathway; betaine aldehyde from choline (cytochrome c reductase route): step 1/1. In terms of biological role, involved in the biosynthesis of the osmoprotectant glycine betaine. Catalyzes the oxidation of choline to betaine aldehyde and betaine aldehyde to glycine betaine at the same rate. The chain is Oxygen-dependent choline dehydrogenase from Yersinia pseudotuberculosis serotype O:1b (strain IP 31758).